Consider the following 188-residue polypeptide: Protein SYC1 (188 aa).

Component of the cleavage and polyadenylation factor (CPF) complex, which is composed of at least PTI1, SYC1, SSU72, GLC7, MPE1, REF2, PFS2, PTA1, YSH1/BRR5, SWD2, CFT2/YDH1, YTH1, CFT1/YHH1, FIP1 and PAP1. Component of the APT complex, which is a subcomplex of CPF, and is composed of PTI1, SYC1, SSU72, GLC7, REF2, PTA1 and SWD2.

Its subcellular location is the nucleus. Functionally, component of the cleavage and polyadenylation factor (CPF) complex, which plays a key role in polyadenylation-dependent pre-mRNA 3'-end formation and cooperates with cleavage factors including the CFIA complex and NAB4/CFIB. Component of the APT complex, which may be involved in polyadenylation-independent transcript 3'-end formation, including snoRNAs and snRNAs. This is Protein SYC1 (SYC1) from Saccharomyces cerevisiae (strain ATCC 204508 / S288c) (Baker's yeast).